Reading from the N-terminus, the 358-residue chain is UDP-N-acetylglucosamine--N-acetylmuramyl-(pentapeptide) pyrophosphoryl-undecaprenol N-acetylglucosamine transferase (358 aa).

Residues 10-12 (TGG), Asn124, Arg165, Ser191, Ile246, and Gln291 each bind UDP-N-acetyl-alpha-D-glucosamine.

It belongs to the glycosyltransferase 28 family. MurG subfamily.

It is found in the cell inner membrane. It catalyses the reaction di-trans,octa-cis-undecaprenyl diphospho-N-acetyl-alpha-D-muramoyl-L-alanyl-D-glutamyl-meso-2,6-diaminopimeloyl-D-alanyl-D-alanine + UDP-N-acetyl-alpha-D-glucosamine = di-trans,octa-cis-undecaprenyl diphospho-[N-acetyl-alpha-D-glucosaminyl-(1-&gt;4)]-N-acetyl-alpha-D-muramoyl-L-alanyl-D-glutamyl-meso-2,6-diaminopimeloyl-D-alanyl-D-alanine + UDP + H(+). The protein operates within cell wall biogenesis; peptidoglycan biosynthesis. In terms of biological role, cell wall formation. Catalyzes the transfer of a GlcNAc subunit on undecaprenyl-pyrophosphoryl-MurNAc-pentapeptide (lipid intermediate I) to form undecaprenyl-pyrophosphoryl-MurNAc-(pentapeptide)GlcNAc (lipid intermediate II). The polypeptide is UDP-N-acetylglucosamine--N-acetylmuramyl-(pentapeptide) pyrophosphoryl-undecaprenol N-acetylglucosamine transferase (Citrifermentans bemidjiense (strain ATCC BAA-1014 / DSM 16622 / JCM 12645 / Bem) (Geobacter bemidjiensis)).